The primary structure comprises 102 residues: NADH-quinone oxidoreductase subunit K (102 aa).

Helical transmembrane passes span 6–26, 30–50, and 62–82; these read LEHG…GLMV, ILFV…AFIV, and VMFI…LAIL.

This sequence belongs to the complex I subunit 4L family. In terms of assembly, NDH-1 is composed of 13 different subunits. Subunits NuoA, H, J, K, L, M, N constitute the membrane sector of the complex.

It localises to the cell inner membrane. The enzyme catalyses a quinone + NADH + 5 H(+)(in) = a quinol + NAD(+) + 4 H(+)(out). Functionally, NDH-1 shuttles electrons from NADH, via FMN and iron-sulfur (Fe-S) centers, to quinones in the respiratory chain. The immediate electron acceptor for the enzyme in this species is believed to be ubiquinone. Couples the redox reaction to proton translocation (for every two electrons transferred, four hydrogen ions are translocated across the cytoplasmic membrane), and thus conserves the redox energy in a proton gradient. The chain is NADH-quinone oxidoreductase subunit K from Pseudomonas putida (strain W619).